The chain runs to 384 residues: Carbamoyl phosphate synthase small chain (384 aa).

Positions 1-195 (MLPVLPPALL…LGRGHGTLAD (195 aa)) are CPSase. L-glutamine-binding residues include Ser-50, Gly-247, and Gly-249. The Glutamine amidotransferase type-1 domain maps to 199–384 (HVVAYDFGVK…RFVALMQERA (186 aa)). The active-site Nucleophile is the Cys-275. Residues Leu-276, Gln-279, Asn-317, Gly-319, and Phe-320 each coordinate L-glutamine. Residues His-359 and Glu-361 contribute to the active site.

The protein belongs to the CarA family. Composed of two chains; the small (or glutamine) chain promotes the hydrolysis of glutamine to ammonia, which is used by the large (or ammonia) chain to synthesize carbamoyl phosphate. Tetramer of heterodimers (alpha,beta)4.

The enzyme catalyses hydrogencarbonate + L-glutamine + 2 ATP + H2O = carbamoyl phosphate + L-glutamate + 2 ADP + phosphate + 2 H(+). It catalyses the reaction L-glutamine + H2O = L-glutamate + NH4(+). The protein operates within amino-acid biosynthesis; L-arginine biosynthesis; carbamoyl phosphate from bicarbonate: step 1/1. Its pathway is pyrimidine metabolism; UMP biosynthesis via de novo pathway; (S)-dihydroorotate from bicarbonate: step 1/3. Its function is as follows. Small subunit of the glutamine-dependent carbamoyl phosphate synthetase (CPSase). CPSase catalyzes the formation of carbamoyl phosphate from the ammonia moiety of glutamine, carbonate, and phosphate donated by ATP, constituting the first step of 2 biosynthetic pathways, one leading to arginine and/or urea and the other to pyrimidine nucleotides. The small subunit (glutamine amidotransferase) binds and cleaves glutamine to supply the large subunit with the substrate ammonia. In Rubrivivax gelatinosus (strain NBRC 100245 / IL144), this protein is Carbamoyl phosphate synthase small chain.